The following is a 280-amino-acid chain: Tryptophan synthase alpha chain (280 aa).

Active-site proton acceptor residues include Glu49 and Asp60.

It belongs to the TrpA family. Tetramer of two alpha and two beta chains.

It catalyses the reaction (1S,2R)-1-C-(indol-3-yl)glycerol 3-phosphate + L-serine = D-glyceraldehyde 3-phosphate + L-tryptophan + H2O. The protein operates within amino-acid biosynthesis; L-tryptophan biosynthesis; L-tryptophan from chorismate: step 5/5. Functionally, the alpha subunit is responsible for the aldol cleavage of indoleglycerol phosphate to indole and glyceraldehyde 3-phosphate. This Corynebacterium glutamicum (strain R) protein is Tryptophan synthase alpha chain.